The sequence spans 262 residues: Polyamine aminopropyltransferase (262 aa).

The region spanning 1–249 is the PABS domain; sequence MWITQEITPY…DIHRAAFALP (249 aa). Residue N29 coordinates S-methyl-5'-thioadenosine. D83 contacts spermidine. Residue D155 is the Proton acceptor of the active site.

This sequence belongs to the spermidine/spermine synthase family. As to quaternary structure, homodimer or homotetramer.

Its subcellular location is the cytoplasm. It catalyses the reaction S-adenosyl 3-(methylsulfanyl)propylamine + putrescine = S-methyl-5'-thioadenosine + spermidine + H(+). Its pathway is amine and polyamine biosynthesis; spermidine biosynthesis; spermidine from putrescine: step 1/1. In terms of biological role, catalyzes the irreversible transfer of a propylamine group from the amino donor S-adenosylmethioninamine (decarboxy-AdoMet) to putrescine (1,4-diaminobutane) to yield spermidine. The polypeptide is Polyamine aminopropyltransferase (Helicobacter pylori (strain HPAG1)).